The chain runs to 307 residues: Fructose-bisphosphate aldolase (307 aa).

Position 49 (serine 49) interacts with D-glyceraldehyde 3-phosphate. Catalysis depends on aspartate 82, which acts as the Proton donor. Residues histidine 83, aspartate 104, glutamate 134, and histidine 180 each coordinate Zn(2+). Dihydroxyacetone phosphate is bound at residue glycine 181. Position 210 (histidine 210) interacts with Zn(2+). Residues 211–213 (GAS) and 253–256 (NTDT) each bind dihydroxyacetone phosphate.

The protein belongs to the class II fructose-bisphosphate aldolase family. In terms of assembly, homodimer. Requires Zn(2+) as cofactor.

It carries out the reaction beta-D-fructose 1,6-bisphosphate = D-glyceraldehyde 3-phosphate + dihydroxyacetone phosphate. It functions in the pathway carbohydrate degradation; glycolysis; D-glyceraldehyde 3-phosphate and glycerone phosphate from D-glucose: step 4/4. Catalyzes the aldol condensation of dihydroxyacetone phosphate (DHAP or glycerone-phosphate) with glyceraldehyde 3-phosphate (G3P) to form fructose 1,6-bisphosphate (FBP) in gluconeogenesis and the reverse reaction in glycolysis. In Helicobacter pylori (strain ATCC 700392 / 26695) (Campylobacter pylori), this protein is Fructose-bisphosphate aldolase (fba).